The sequence spans 264 residues: Type III pantothenate kinase (264 aa).

6–13 (DIGNTQTV) serves as a coordination point for ATP. Substrate contacts are provided by residues Y100 and 107–110 (GADR). Residue D109 is the Proton acceptor of the active site. D129 contacts K(+). ATP is bound at residue T132. A substrate-binding site is contributed by T185.

This sequence belongs to the type III pantothenate kinase family. Homodimer. Requires NH4(+) as cofactor. It depends on K(+) as a cofactor.

The protein localises to the cytoplasm. It carries out the reaction (R)-pantothenate + ATP = (R)-4'-phosphopantothenate + ADP + H(+). The protein operates within cofactor biosynthesis; coenzyme A biosynthesis; CoA from (R)-pantothenate: step 1/5. Its function is as follows. Catalyzes the phosphorylation of pantothenate (Pan), the first step in CoA biosynthesis. This chain is Type III pantothenate kinase, found in Rubrobacter xylanophilus (strain DSM 9941 / JCM 11954 / NBRC 16129 / PRD-1).